The sequence spans 301 residues: GTPase Era (301 aa).

The 169-residue stretch at 7–175 (YCGFIAIVGR…AGIVRKHLPE (169 aa)) folds into the Era-type G domain. Residues 15-22 (GRPNVGKS) form a G1 region. GTP is bound at residue 15 to 22 (GRPNVGKS). Residues 41–45 (QTTRH) form a G2 region. A G3 region spans residues 62–65 (DTPG). Residues 62 to 66 (DTPGL) and 124 to 127 (NKVD) each bind GTP. A G4 region spans residues 124–127 (NKVD). The tract at residues 154–156 (LSA) is G5. The region spanning 198–283 (IREKLMRFLG…HLELWVKVKS (86 aa)) is the KH type-2 domain.

This sequence belongs to the TRAFAC class TrmE-Era-EngA-EngB-Septin-like GTPase superfamily. Era GTPase family. In terms of assembly, monomer.

The protein localises to the cytoplasm. The protein resides in the cell inner membrane. Functionally, an essential GTPase that binds both GDP and GTP, with rapid nucleotide exchange. Plays a role in 16S rRNA processing and 30S ribosomal subunit biogenesis and possibly also in cell cycle regulation and energy metabolism. In Enterobacter sp. (strain 638), this protein is GTPase Era.